Here is a 663-residue protein sequence, read N- to C-terminus: Shugoshin 1 (663 aa).

2 coiled-coil regions span residues 8–29 (KQAF…RIKK) and 110–132 (DTAE…NLLE). 3 disordered regions span residues 207–250 (RNTA…MNKN), 278–401 (EHTV…LNSG), and 417–478 (FRQN…ARKN). Composition is skewed to basic and acidic residues over residues 231-242 (RLEECNNEDKTE), 280-304 (TVVE…REID), 339-358 (KNKE…KAER), and 366-394 (KPWE…KEKM). Positions 427 to 437 (NESSLEISSSE) are enriched in low complexity. Over residues 443 to 453 (SLYKPYKDKSK) the composition is skewed to basic and acidic residues.

This sequence belongs to the shugoshin family. As to quaternary structure, binds microtubules. Ubiquitinated by the anaphase promoting complex (APC) at the onset of anaphase, conducting to its degradation.

Its subcellular location is the nucleus. The protein resides in the chromosome. The protein localises to the centromere. It is found in the kinetochore. It localises to the nucleus speckle. Plays a central role in chromosome cohesion during mitosis by preventing premature dissociation of cohesin complex from centromeres after prophase, when most of cohesin complex dissociates from chromosomes arms. May act by preventing phosphorylation of the stag2 subunit of cohesin complex at the centromere, ensuring cohesin persistence at centromere until cohesin cleavage by espl1/separase at anaphase. May regulate kinetochore microtubule stability in mitosis, possibly to sense tension on mitotic chromosomes. The chain is Shugoshin 1 from Xenopus laevis (African clawed frog).